Here is a 482-residue protein sequence, read N- to C-terminus: ATP synthase subunit beta (482 aa).

162 to 169 (GGAGVGKT) provides a ligand contact to ATP.

The protein belongs to the ATPase alpha/beta chains family. As to quaternary structure, F-type ATPases have 2 components, CF(1) - the catalytic core - and CF(0) - the membrane proton channel. CF(1) has five subunits: alpha(3), beta(3), gamma(1), delta(1), epsilon(1). CF(0) has four main subunits: a(1), b(1), b'(1) and c(9-12).

The protein resides in the cellular thylakoid membrane. The catalysed reaction is ATP + H2O + 4 H(+)(in) = ADP + phosphate + 5 H(+)(out). Produces ATP from ADP in the presence of a proton gradient across the membrane. The catalytic sites are hosted primarily by the beta subunits. The polypeptide is ATP synthase subunit beta (Synechococcus sp. (strain PCC 6716)).